A 335-amino-acid chain; its full sequence is 2-acylglycerol O-acyltransferase 1 (335 aa).

2 helical membrane-spanning segments follow: residues 24–44 (WVFSFLLLAQCCIGIFICLVL) and 47–67 (VWLLLALYVLWLYLDWETPQA). 2 N-linked (GlcNAc...) asparagine glycosylation sites follow: asparagine 125 and asparagine 180.

Belongs to the diacylglycerol acyltransferase family.

Its subcellular location is the endoplasmic reticulum membrane. It carries out the reaction a 2-acylglycerol + an acyl-CoA = a 1,2-diacylglycerol + CoA. The enzyme catalyses a 2-acylglycerol + an acyl-CoA = a 1,2-diacyl-sn-glycerol + CoA. It catalyses the reaction a 2-acylglycerol + an acyl-CoA = a 2,3-diacyl-sn-glycerol + CoA. The catalysed reaction is a 1-acylglycerol + an acyl-CoA = a 1,2-diacylglycerol + CoA. It carries out the reaction a 1-acylglycerol + an acyl-CoA = a 1,3-diacylglycerol + CoA. The enzyme catalyses a 1-acyl-sn-glycerol + an acyl-CoA = a 1,3-diacyl-sn-glycerol + CoA. It catalyses the reaction a 3-acyl-sn-glycerol + an acyl-CoA = a 1,3-diacyl-sn-glycerol + CoA. It participates in glycerolipid metabolism; triacylglycerol biosynthesis. Its function is as follows. Involved in glycerolipid synthesis and lipid metabolism. Catalyzes the formation of diacylglycerol, the precursor of triacylglycerol, by transferring the acyl chain of a fatty acyl-CoA to a monoacylglycerol, mainly at the sn-1 or sn-3 positions. It uses both sn-2-monoacylglycerol (2-acylglycerol) and sn-1-monoacylglycerol (1-acyl-sn-glycerol) equally well as substrates, and uses sn-3-monoacylglycerol (3-acyl-sn-glycerol) with lower efficiency. The polypeptide is 2-acylglycerol O-acyltransferase 1 (mogat1) (Xenopus laevis (African clawed frog)).